The sequence spans 426 residues: 3-phosphoshikimate 1-carboxyvinyltransferase (426 aa).

The 3-phosphoshikimate site is built by Lys-22, Ser-23, and Arg-27. Residue Lys-22 participates in phosphoenolpyruvate binding. Phosphoenolpyruvate contacts are provided by Gly-96 and Arg-124. Residues Ser-170, Ser-171, Gln-172, Ser-198, Asp-314, Asn-337, and Lys-341 each coordinate 3-phosphoshikimate. Gln-172 contributes to the phosphoenolpyruvate binding site. Asp-314 acts as the Proton acceptor in catalysis. Phosphoenolpyruvate-binding residues include Arg-345, Arg-387, and Lys-412.

It belongs to the EPSP synthase family. As to quaternary structure, monomer.

It localises to the cytoplasm. The enzyme catalyses 3-phosphoshikimate + phosphoenolpyruvate = 5-O-(1-carboxyvinyl)-3-phosphoshikimate + phosphate. The protein operates within metabolic intermediate biosynthesis; chorismate biosynthesis; chorismate from D-erythrose 4-phosphate and phosphoenolpyruvate: step 6/7. In terms of biological role, catalyzes the transfer of the enolpyruvyl moiety of phosphoenolpyruvate (PEP) to the 5-hydroxyl of shikimate-3-phosphate (S3P) to produce enolpyruvyl shikimate-3-phosphate and inorganic phosphate. The protein is 3-phosphoshikimate 1-carboxyvinyltransferase of Shewanella woodyi (strain ATCC 51908 / MS32).